Consider the following 123-residue polypeptide: Protein Wnt-7 (123 aa).

Ser1 carries the O-palmitoleoyl serine; by PORCN lipid modification. Asn79 and Asn90 each carry an N-linked (GlcNAc...) asparagine glycan. A disulfide bridge links Cys89 with Cys104.

Belongs to the Wnt family. Post-translationally, palmitoleoylation is required for efficient binding to frizzled receptors. Depalmitoleoylation leads to Wnt signaling pathway inhibition.

The protein resides in the secreted. The protein localises to the extracellular space. It localises to the extracellular matrix. In terms of biological role, ligand for members of the frizzled family of seven transmembrane receptors. Probable developmental protein. May be a signaling molecule which affects the development of discrete regions of tissues. Is likely to signal over only few cell diameters. The protein is Protein Wnt-7 (WNT-7) of Strongylocentrotus purpuratus (Purple sea urchin).